The sequence spans 103 residues: NAD(P)H-quinone oxidoreductase subunit 4L (103 aa).

3 helical membrane-spanning segments follow: residues 5–25, 32–52, and 66–86; these read LQYCLILAAALFCIGIYGLIT, VLMSIELLLNAVNLNLMGFSN, and IFVITIAAAEAAVGLAIVLAI.

The protein belongs to the complex I subunit 4L family. In terms of assembly, NDH-1 can be composed of about 15 different subunits; different subcomplexes with different compositions have been identified which probably have different functions.

Its subcellular location is the cellular thylakoid membrane. It carries out the reaction a plastoquinone + NADH + (n+1) H(+)(in) = a plastoquinol + NAD(+) + n H(+)(out). The catalysed reaction is a plastoquinone + NADPH + (n+1) H(+)(in) = a plastoquinol + NADP(+) + n H(+)(out). Functionally, NDH-1 shuttles electrons from an unknown electron donor, via FMN and iron-sulfur (Fe-S) centers, to quinones in the respiratory and/or the photosynthetic chain. The immediate electron acceptor for the enzyme in this species is believed to be plastoquinone. Couples the redox reaction to proton translocation, and thus conserves the redox energy in a proton gradient. Cyanobacterial NDH-1 also plays a role in inorganic carbon-concentration. The protein is NAD(P)H-quinone oxidoreductase subunit 4L of Synechocystis sp. (strain ATCC 27184 / PCC 6803 / Kazusa).